The following is a 258-amino-acid chain: MSKVAMVTGGAQGIGRGISEKLAADGFDIAVADLPQQEEQAAETIKLIEAADQKAVFVGLDVTDKANFDSAIDEAAEKLGGFDVLVNNAGIAQIKPLLEVTEEDLKQIYSVNVFSVFFGIQAASRKFDELGVKGKIINAASIAAIQGFPILSAYSTTKFAVRGLTQAAAQELAPKGHTVNAYAPGIVGTGMWEQIDAELSKINGKPIGENFKEYSSSIALGRPSVPEDVAGLVSFLASENSNYVTGQVMLVDGGMLYN.

NAD(+) contacts are provided by residues 12–14, D33, Q37, 61–62, N88, Y154, K158, and 184–189; these read QGI, DV, and PGIVGT. Y154 functions as the Proton acceptor in the catalytic mechanism.

It belongs to the short-chain dehydrogenases/reductases (SDR) family. In terms of assembly, homotetramer.

The catalysed reaction is (S,S)-butane-2,3-diol + NAD(+) = (S)-acetoin + NADH + H(+). It carries out the reaction (S)-acetoin + NAD(+) = diacetyl + NADH + H(+). With respect to regulation, slightly activated by Ba(2+), Ca(2+), Mn(2+), Mg(2+), and Co(2+), while Hg(2+) and Cu(2+) cause marked inhibition of the activity. Ni(2+), Zn(2+) and Cd(2+) have no effect on the catalytic activity. Is also slightly inhibited by lactate, pyruvate, succinate, acetate and formate. Catalyzes the reversible reduction of (S)-acetoin to (S,S)-butane-2,3-diol (L-BD) in the presence of NADH. To a lesser extent, can also catalyze the irreversible reduction of diacetyl to (S)-acetoin. Cannot oxidize meso-BD, D-BD, 2-butanol, 1,2-propanediol, ethanol, acetol, 1,2-butanediol, 1,3-butanediol, n-butanol, and n-propanol. Cannot reduce (R)-acetoin, acetol, dihydroxyacetone and 2,4-pentanedione. The chain is L-2,3-butanediol dehydrogenase from Corynebacterium glutamicum (Brevibacterium saccharolyticum).